Here is a 109-residue protein sequence, read N- to C-terminus: MDMDLNNRLTEDETLEQAYDIFLELAADNLDPADVLLFNLQFEERGGAELFDPAEDWLEHVDFDLNPDFFAEVVIGLADSEDGEINDVFARILLCREKDHKLCHIIWRE.

Belongs to the putative dsDNA mimic protein family.

May act as a double-stranded DNA (dsDNA) mimic. Probably regulates the activity of a dsDNA-binding protein. The chain is Putative double-stranded DNA mimic protein YciU from Escherichia coli O45:K1 (strain S88 / ExPEC).